Consider the following 495-residue polypeptide: Probable cytosol aminopeptidase (495 aa).

Mn(2+) is bound by residues Lys-267 and Asp-272. The active site involves Lys-279. The Mn(2+) site is built by Asp-290, Asp-349, and Glu-351. The active site involves Arg-353.

Belongs to the peptidase M17 family. It depends on Mn(2+) as a cofactor.

Its subcellular location is the cytoplasm. The enzyme catalyses Release of an N-terminal amino acid, Xaa-|-Yaa-, in which Xaa is preferably Leu, but may be other amino acids including Pro although not Arg or Lys, and Yaa may be Pro. Amino acid amides and methyl esters are also readily hydrolyzed, but rates on arylamides are exceedingly low.. It catalyses the reaction Release of an N-terminal amino acid, preferentially leucine, but not glutamic or aspartic acids.. Functionally, presumably involved in the processing and regular turnover of intracellular proteins. Catalyzes the removal of unsubstituted N-terminal amino acids from various peptides. In Histophilus somni (strain 129Pt) (Haemophilus somnus), this protein is Probable cytosol aminopeptidase.